Consider the following 414-residue polypeptide: HERV-H LTR-associating protein 2 (414 aa).

The N-terminal stretch at 1–22 (MKAQTALSFFLILITSLSGSQG) is a signal peptide. The Ig-like V-type 1 domain maps to 61-131 (IHWKYQDSYK…YVGTAIQVIT (71 aa)). N-linked (GlcNAc...) asparagine glycosylation is found at N90 and N103. The Ig-like C1-type domain occupies 138–222 (VGVFLTPVMK…ENSLLKQTWT (85 aa)). 2 cysteine pairs are disulfide-bonded: C159–C210 and C243–C317. Residues 235-328 (QSEHVSLSCQ…ISSDEYTLLT (94 aa)) enclose the Ig-like V-type 2 domain. N-linked (GlcNAc...) asparagine glycosylation occurs at N318. Residues 345 to 365 (KGLWILVPSAILAAFLLIWSV) traverse the membrane as a helical segment. The tract at residues 383 to 414 (GAQQERCCVPPGERCPSAPDNGEENVPLSGKV) is disordered.

Interacts with TMIGD2. In terms of tissue distribution, expressed at high levels in colon, kidney, testis, lung and pancreas, and at lower levels in small intestine, liver and skeletal muscle. In immune cells, highly expressed in B-cells, dendritic cells and macrophages. Not detected in T-cells.

It localises to the membrane. Its function is as follows. Through interaction with TMIGD2, costimulates T-cells in the context of TCR-mediated activation. Enhances T-cell proliferation and cytokine production via an AKT-dependent signaling cascade. This chain is HERV-H LTR-associating protein 2 (HHLA2), found in Homo sapiens (Human).